The primary structure comprises 783 residues: Cilia- and flagella-associated protein 91 (783 aa).

A compositionally biased stretch (acidic residues) spans glutamate 748 to aspartate 760. The disordered stretch occupies residues glutamate 748–glycine 783. Polar residues predominate over residues proline 764–proline 776.

It belongs to the CFAP91 family. Part of a complex containing MYCBP, AKAP1 and PRKAR2B. Interacts with MYCBP and AKAP1. Interacts with CFAP61. Phosphorylated by PKA. As to expression, expressed in the testis, in cells involved in spermatogenesis.

The protein resides in the cytoplasm. The protein localises to the mitochondrion. Its subcellular location is the cytoskeleton. It localises to the cilium axoneme. In terms of biological role, involved in sperm flagellum axonemal organization and function. May regulate cilium motility through its role in the assembly of the axonemal radial spokes. The polypeptide is Cilia- and flagella-associated protein 91 (Mus musculus (Mouse)).